Consider the following 398-residue polypeptide: Secreted aspartic protease 2 (398 aa).

An N-terminal signal peptide occupies residues methionine 1–alanine 18. A propeptide spans threonine 19 to arginine 56 (activation peptide). The 315-residue stretch at tyrosine 70–alanine 384 folds into the Peptidase A1 domain. Residue aspartate 88 is part of the active site. Aspartate 88–glycine 90 is a binding site for pepstatin A. A disulfide bridge connects residues cysteine 103 and cysteine 115. Glycine 141–aspartate 142 provides a ligand contact to pepstatin A. Residues aspartate 247 and aspartate 270 each coordinate Zn(2+). Residue aspartate 274 is part of the active site. Pepstatin A is bound at residue aspartate 274–threonine 278. A disulfide bond links cysteine 312 and cysteine 350. Residues asparagine 313 and asparagine 321 are each glycosylated (N-linked (GlcNAc...) asparagine).

Belongs to the peptidase A1 family. As to quaternary structure, monomer.

The protein localises to the secreted. The enzyme catalyses Preferential cleavage at the carboxyl of hydrophobic amino acids, but fails to cleave 15-Leu-|-Tyr-16, 16-Tyr-|-Leu-17 and 24-Phe-|-Phe-25 of insulin B chain. Activates trypsinogen, and degrades keratin.. Secreted aspartic peptidases (SAPs) are a group of ten acidic hydrolases considered as key virulence factors. These enzymes supply the fungus with nutrient amino acids as well as are able to degrade the selected host's proteins involved in the immune defense. Induces host inflammatory cytokine production in a proteolytic activity-independent way. Plays a role in tissue damage during superficial infection. Moreover, acts toward human hemoglobin though limited proteolysis to generate a variety of antimicrobial hemocidins, enabling to compete with the other microorganisms of the same physiological niche using the microbicidal peptides generated from the host protein. Functionally, plays a key role in defense against host by cleaving histatin-5 (Hst 5), a peptide from human saliva that carries out fungicidal activity. The cleavage rate decreases in an order of SAP2 &gt; SAP9 &gt; SAP3 &gt; SAP7 &gt; SAP4 &gt; SAP1 &gt; SAP8. The first cleavage occurs between residues 'Lys-17' and 'His-18' of Hst 5, giving DSHAKRHHGYKRKFHEK and HHSHRGY peptides. Simultaneously, the DSHAKRHHGYKRK peptide is also formed. Further fragmentation by SAP2 results in FHEK and DSHAKRHHGY products. This Candida albicans (Yeast) protein is Secreted aspartic protease 2.